Here is a 397-residue protein sequence, read N- to C-terminus: Odorant receptor 98a (397 aa).

Topologically, residues 1–43 (MLFNYLRKPNPTNLLTSPDSFRYFEYGMFCMGWHTPATHKIIY) are cytoplasmic. A helical membrane pass occupies residues 44–64 (YITSCLIFAWCAVYLPIGIII). The Extracellular segment spans residues 65 to 77 (SFKTDINTFTPNE). The helical transmembrane segment at 78–98 (LLTVMQLFFNSVGMPFKVLFF) threads the bilayer. At 99–138 (NLYISGFYKAKKLLSEMDKRCTTLKERVEVHQGVVRCNKA) the chain is on the cytoplasmic side. The chain crosses the membrane as a helical span at residues 139 to 159 (YLIYQFIYTAYTISTFLSAAL). The Extracellular segment spans residues 160-192 (SGKLPWRIYNPFVDFRESRSSFWKAALNETALM). The N-linked (GlcNAc...) asparagine glycan is linked to asparagine 187. Residues 193 to 213 (LFAVTQTLMSDIYPLLYGLIL) traverse the membrane as a helical segment. At 214 to 266 (RVHLKLLRLRVESLCTDSGKSDAENEQDLIKCIKDHNLIIDYAAAIRPAVTRT) the chain is on the cytoplasmic side. A helical transmembrane segment spans residues 267-287 (IFVQFLLIGICLGLSMINLLF). Residues 288-293 (FADIWT) lie on the Extracellular side of the membrane. Residues 294 to 314 (GLATVAYINGLMVQTFPFCFV) traverse the membrane as a helical segment. The Cytoplasmic segment spans residues 315–354 (CDLLKKDCELLVSAIFHSNWINSSRSYKSSLRYFLKNAQK). A helical membrane pass occupies residues 355-375 (SIAFTAGSIFPISTGSNIKVA). Residues 376 to 397 (KLAFSVVTFVNQLNIADRLTKN) are Extracellular-facing.

It belongs to the insect chemoreceptor superfamily. Heteromeric odorant receptor channel (TC 1.A.69) family. Or2a subfamily. Interacts with Orco. Complexes exist early in the endomembrane system in olfactory sensory neurons (OSNs), coupling these complexes to the conserved ciliary trafficking pathway. In terms of tissue distribution, expressed in olfactory sensory neurons in the antenna.

The protein resides in the cell membrane. Odorant receptor which mediates acceptance or avoidance behavior, depending on its substrates. The odorant receptor repertoire encodes a large collection of odor stimuli that vary widely in identity, intensity, and duration. May form a complex with Orco to form odorant-sensing units, providing sensitive and prolonged odorant signaling and calcium permeability. In Drosophila melanogaster (Fruit fly), this protein is Odorant receptor 98a (Or98a).